Consider the following 323-residue polypeptide: MISLLRLCSFLAAGSILVQGSPIIAPSAPTWDTPNNFTSPSNFTSKPGNEASPFWLIGHRVLTKGGVRAALGHGANALEVDITGWWNGWYGDHDGLPSSAGDKVADLFDEIAYRRRQGAQVSFVWLDLKNPDFNKNGVNIVSLMTLCREKLEPAGVRVLFGFYSSQTSGHAFRFVKQVLNENEAIGIDGSFEPVEKDFEKNGIRVEKRVFSSGLFNPDFNFGTCQDRASGVCTQLREGKESHKFGKVFGWTVSSYTRKDHVYKMMEVGVDGLIYGFVASHYYNHKDIRQTIRTIRGWLDEHRDTHRLATNDDNPWSMSSRKSS.

Residues 1–20 (MISLLRLCSFLAAGSILVQG) form the signal peptide. The active site involves histidine 59. Glutamate 79, aspartate 81, and aspartate 127 together coordinate Mg(2+). The short motif at 308-315 (ATNDDNPW) is the SMD-tail element.

Belongs to the sphingomyelinase D/phospholipase D family. Requires Mg(2+) as cofactor.

It is found in the secreted. The enzyme catalyses a sphingomyelin + H2O = an N-acylsphing-4-enine 1-phosphate + choline + H(+). Functionally, catalyzes the hydrolysis of sphingomyelin. Sphingomyelinases D are produced by some spider in their venoms, but also by arthropods such as ticks, or pathogenic bacteria and fungi. They might play a role in pathogenicity through different mechanisms, such as membrane destabilization and host cell penetration, but also pulmonary inflammation and cutaneous lesions. The chain is Sphingomyelinase D from Trichophyton rubrum (strain ATCC MYA-4607 / CBS 118892) (Athlete's foot fungus).